A 754-amino-acid polypeptide reads, in one-letter code: Aspartyl/asparaginyl beta-hydroxylase (754 aa).

The interval 1–48 (MAPRKNAKGGGGNSSSSSSGSPTGCTSGGSSSPGARRETKQGGLKNGR) is disordered. Topologically, residues 1-56 (MAPRKNAKGGGGNSSSSSSGSPTGCTSGGSSSPGARRETKQGGLKNGRKGGLSGSS) are cytoplasmic. The span at 14–34 (SSSSSSGSPTGCTSGGSSSPG) shows a compositional bias: low complexity. Ser15 is modified (phosphoserine). Residues 57-77 (FFTWFMVIALLGVWTSVAVVW) traverse the membrane as a helical; Signal-anchor for type II membrane protein segment. At 78–754 (FDLVDYEEVL…PHQRRSLPAI (677 aa)) the chain is on the lumenal side. N-linked (GlcNAc...) asparagine glycosylation is present at Asn96. Residues Asp109, Asp111, Asp113, Asp115, and Asp120 each coordinate Ca(2+). Disordered regions lie at residues 176–197 (VYSE…ELQP) and 247–326 (EQEN…KKKK). 2 stretches are compositionally biased toward basic and acidic residues: residues 261–284 (DAER…DHAV) and 309–318 (TNKKADEPGK). TPR repeat units follow at residues 337-370 (IKAE…YPQS), 378-411 (AQCE…PDAP), 450-483 (TALK…TPND), 485-517 (FAKV…GDPG), and 521-553 (GRFY…GHFA). Residue Asn466 is glycosylated (N-linked (GlcNAc...) asparagine). Trp621 contacts 2-oxoglutarate. Cysteines 637 and 644 form a disulfide. A 2-oxoglutarate-binding site is contributed by Ser664. Residue His675 participates in Fe cation binding. Residue 684–686 (RMH) coordinates 2-oxoglutarate. N-linked (GlcNAc...) asparagine glycosylation is present at Asn702. His721 lines the Fe cation pocket. Residue Arg731 participates in 2-oxoglutarate binding.

The protein belongs to the aspartyl/asparaginyl beta-hydroxylase family. Monomer. Fe cation is required as a cofactor. Post-translationally, might be processed to the 56 kDa (AA 289-754) or 52 kDa (AA 311-754) forms in the lumen of the endoplasmic reticulum.

It localises to the endoplasmic reticulum membrane. It carries out the reaction L-aspartyl-[protein] + 2-oxoglutarate + O2 = 3-hydroxy-L-aspartyl-[protein] + succinate + CO2. Specifically hydroxylates an Asp or Asn residue in certain epidermal growth factor-like (EGF) domains of a number of proteins. The chain is Aspartyl/asparaginyl beta-hydroxylase (ASPH) from Bos taurus (Bovine).